The sequence spans 317 residues: L-lactate dehydrogenase (317 aa).

The NAD(+) site is built by Val16, Asp37, and Tyr68. Residues Gln85, Arg91, 123 to 126, and 151 to 154 contribute to the substrate site; these read NPCD and DSAR. 121 to 123 is a binding site for NAD(+); that stretch reads ASN. The active-site Proton acceptor is His178. Tyr222 is modified (phosphotyrosine). Position 231 (Thr231) interacts with substrate.

Belongs to the LDH/MDH superfamily. LDH family. In terms of assembly, homotetramer.

The protein localises to the cytoplasm. The enzyme catalyses (S)-lactate + NAD(+) = pyruvate + NADH + H(+). Its pathway is fermentation; pyruvate fermentation to lactate; (S)-lactate from pyruvate: step 1/1. Catalyzes the conversion of lactate to pyruvate. This is L-lactate dehydrogenase from Mesoplasma florum (strain ATCC 33453 / NBRC 100688 / NCTC 11704 / L1) (Acholeplasma florum).